Reading from the N-terminus, the 305-residue chain is Methionyl-tRNA formyltransferase (305 aa).

Residue 111–114 (SLLP) coordinates (6S)-5,6,7,8-tetrahydrofolate.

The protein belongs to the Fmt family.

It catalyses the reaction L-methionyl-tRNA(fMet) + (6R)-10-formyltetrahydrofolate = N-formyl-L-methionyl-tRNA(fMet) + (6S)-5,6,7,8-tetrahydrofolate + H(+). Functionally, attaches a formyl group to the free amino group of methionyl-tRNA(fMet). The formyl group appears to play a dual role in the initiator identity of N-formylmethionyl-tRNA by promoting its recognition by IF2 and preventing the misappropriation of this tRNA by the elongation apparatus. In Campylobacter jejuni subsp. jejuni serotype O:6 (strain 81116 / NCTC 11828), this protein is Methionyl-tRNA formyltransferase.